The primary structure comprises 372 residues: N-methyl-L-tryptophan oxidase (372 aa).

Position 4–34 (D4–H34) interacts with FAD. The residue at position 308 (C308) is an S-8alpha-FAD cysteine.

The protein belongs to the MSOX/MTOX family. MTOX subfamily. As to quaternary structure, monomer. It depends on FAD as a cofactor.

The catalysed reaction is N(alpha)-methyl-L-tryptophan + O2 + H2O = L-tryptophan + formaldehyde + H2O2. In terms of biological role, catalyzes the oxidative demethylation of N-methyl-L-tryptophan. The polypeptide is N-methyl-L-tryptophan oxidase (Escherichia coli O7:K1 (strain IAI39 / ExPEC)).